The sequence spans 1256 residues: Muramidase-released protein (1256 aa).

The first 47 residues, 1–47 (MRRSNKKSFDWYGTKQQFSIRKYHFGAASVLLGVSLVLGAGAQVVKA), serve as a signal peptide directing secretion. Small repeat units follow at residues 663–681 (KTTG…VYEK) and 839–861 (KTDG…VYQK). Disordered regions lie at residues 873 to 949 (PETD…VDTP), 967 to 994 (GNPI…KTVT), and 1028 to 1049 (KEPV…TDNK). The Large repeat unit spans residues 953–1006 (VPVKKVVTNHVDEEGNPIAPQEEGTKPNKSIPGYEFTGKTVTDEDGNTTHIYKK). The segment covering 1033–1045 (DTPTSPEGTPYDT) has biased composition (polar residues). The Small repeat unit spans residues 1064–1084 (RVDGTENGKVVEGETVVTYVY). Large repeat units lie at residues 1089–1142 (TPAK…IYKK) and 1143–1195 (TPAK…IYRK). A disordered region spans residues 1102-1137 (EGNPVAPQEEGTKPNKSIPGYEFTGKTVTDEDGNTT). The segment at 1196 to 1229 (LSNKPTTPEKETPAKPQAGKTASGKAQLPNTGEA) is disordered. The short motif at 1223–1227 (LPNTG) is the LPXTG sorting signal element. The residue at position 1226 (threonine 1226) is a Pentaglycyl murein peptidoglycan amidated threonine. A propeptide spans 1227 to 1256 (GEASSVAGALGTAMLVATLAFARKRRRNED) (removed by sortase).

The protein localises to the secreted. Its subcellular location is the cell wall. The polypeptide is Muramidase-released protein (mrp) (Streptococcus suis).